A 125-amino-acid chain; its full sequence is 14 kDa phosphohistidine phosphatase (125 aa).

Position 2 is an N-acetylalanine (Ala2). Lys21 lines the substrate pocket. The active-site Proton acceptor is His53. 94–96 (SMA) is a binding site for substrate.

This sequence belongs to the janus family. In terms of assembly, monomer. As to expression, expressed abundantly in heart and skeletal muscle.

It is found in the cytoplasm. The enzyme catalyses N(pros)-phospho-L-histidyl-[protein] + H2O = L-histidyl-[protein] + phosphate. It catalyses the reaction N(tele)-phospho-L-histidyl-[protein] + H2O = L-histidyl-[protein] + phosphate. Its function is as follows. Exhibits phosphohistidine phosphatase activity. The protein is 14 kDa phosphohistidine phosphatase (PHPT1) of Homo sapiens (Human).